The sequence spans 72 residues: Small ribosomal subunit protein bS20 (72 aa).

It belongs to the bacterial ribosomal protein bS20 family.

Functionally, binds directly to 16S ribosomal RNA. The protein is Small ribosomal subunit protein bS20 (rpsT) of Aeromonas salmonicida.